A 458-amino-acid polypeptide reads, in one-letter code: BUD13 homolog (458 aa).

Disordered regions lie at residues 16–37 (SGDI…SGLR), 81–328 (KQTF…TEEL), and 437–458 (AKTE…AEYE). Positions 138–148 (NRHDSDKDNSP) are enriched in basic and acidic residues. Basic residues-rich tracts occupy residues 175–185 (RNRRSPPRTRR) and 208–218 (PRRRPSSPARR). 3 stretches are compositionally biased toward basic and acidic residues: residues 219–243 (RKDD…KKEE), 266–284 (RDLK…KMFE), and 314–328 (DQAK…TEEL). Positions 262–356 (LQSARDLKEE…AQLEEMARVA (95 aa)) form a coiled coil.

The protein belongs to the CWC26 family.

In Caenorhabditis elegans, this protein is BUD13 homolog.